The primary structure comprises 184 residues: Protein Iojap-related, mitochondrial (184 aa).

The N-terminal 39 residues, 1–39 (MLTTLRSRCSSLLLNQSWKLAPNRIFASSPSFSSSAGIS), are a transit peptide targeting the mitochondrion.

It belongs to the Iojap/RsfS family.

The protein localises to the mitochondrion. Functionally, may be a ribosome silencing factor involved in organelle biogenesis and required for germination. This chain is Protein Iojap-related, mitochondrial, found in Arabidopsis thaliana (Mouse-ear cress).